Here is a 529-residue protein sequence, read N- to C-terminus: Putative cysteine ligase BshC (529 aa).

Residues 450-485 (VKQTKGLENLEKRLLKAQKRNLSDQLQRVIDLQCEL) adopt a coiled-coil conformation.

It belongs to the BshC family.

This Flavobacterium johnsoniae (strain ATCC 17061 / DSM 2064 / JCM 8514 / BCRC 14874 / CCUG 350202 / NBRC 14942 / NCIMB 11054 / UW101) (Cytophaga johnsonae) protein is Putative cysteine ligase BshC.